The primary structure comprises 190 residues: MIEVTRETKETQISVKLNLYGKGQAKIDTGVGFFDHMLEAFTKHAHIDMEVTCTGDTHIDDHHTVEDVGIVIGQALREAIYPVKSIERFGNATVVMDEASVTCDIDLSNRGFLVFELPIGGKVGEFDVELVEEFFRAFAFNLPLTLHLIYNRGKNKHHIIEAAFKALAVSLRRAVAINENAGIPSTKGVL.

Belongs to the imidazoleglycerol-phosphate dehydratase family.

Its subcellular location is the cytoplasm. The catalysed reaction is D-erythro-1-(imidazol-4-yl)glycerol 3-phosphate = 3-(imidazol-4-yl)-2-oxopropyl phosphate + H2O. Its pathway is amino-acid biosynthesis; L-histidine biosynthesis; L-histidine from 5-phospho-alpha-D-ribose 1-diphosphate: step 6/9. The sequence is that of Imidazoleglycerol-phosphate dehydratase from Sulfurovum sp. (strain NBC37-1).